Consider the following 338-residue polypeptide: Ketol-acid reductoisomerase (NADP(+)) (338 aa).

One can recognise a KARI N-terminal Rossmann domain in the interval 1–181 (MNIYYDKDCD…GGGRAGIIET (181 aa)). NADP(+) contacts are provided by residues 24–27 (YGSQ), Arg-47, Ser-50, Ser-52, and 82–85 (DEHQ). Residue His-107 is part of the active site. NADP(+) is bound at residue Gly-133. In terms of domain architecture, KARI C-terminal knotted spans 182-327 (AFREETETDL…ERLRSMMPWI (146 aa)). Asp-190, Glu-194, Glu-226, and Glu-230 together coordinate Mg(2+). Ser-251 is a binding site for substrate.

The protein belongs to the ketol-acid reductoisomerase family. Mg(2+) is required as a cofactor.

The catalysed reaction is (2R)-2,3-dihydroxy-3-methylbutanoate + NADP(+) = (2S)-2-acetolactate + NADPH + H(+). It catalyses the reaction (2R,3R)-2,3-dihydroxy-3-methylpentanoate + NADP(+) = (S)-2-ethyl-2-hydroxy-3-oxobutanoate + NADPH + H(+). The protein operates within amino-acid biosynthesis; L-isoleucine biosynthesis; L-isoleucine from 2-oxobutanoate: step 2/4. It functions in the pathway amino-acid biosynthesis; L-valine biosynthesis; L-valine from pyruvate: step 2/4. Functionally, involved in the biosynthesis of branched-chain amino acids (BCAA). Catalyzes an alkyl-migration followed by a ketol-acid reduction of (S)-2-acetolactate (S2AL) to yield (R)-2,3-dihydroxy-isovalerate. In the isomerase reaction, S2AL is rearranged via a Mg-dependent methyl migration to produce 3-hydroxy-3-methyl-2-ketobutyrate (HMKB). In the reductase reaction, this 2-ketoacid undergoes a metal-dependent reduction by NADPH to yield (R)-2,3-dihydroxy-isovalerate. The polypeptide is Ketol-acid reductoisomerase (NADP(+)) (Nitrosococcus oceani (strain ATCC 19707 / BCRC 17464 / JCM 30415 / NCIMB 11848 / C-107)).